The following is a 544-amino-acid chain: Chaperonin GroEL 2 (544 aa).

ATP-binding positions include 29–32, 86–90, Gly413, 479–481, and Asp495; these read TLGP, DGTTT, and NAA.

The protein belongs to the chaperonin (HSP60) family. In terms of assembly, forms a cylinder of 14 subunits composed of two heptameric rings stacked back-to-back. Interacts with the co-chaperonin GroES.

The protein resides in the cytoplasm. It carries out the reaction ATP + H2O + a folded polypeptide = ADP + phosphate + an unfolded polypeptide.. Together with its co-chaperonin GroES, plays an essential role in assisting protein folding. The GroEL-GroES system forms a nano-cage that allows encapsulation of the non-native substrate proteins and provides a physical environment optimized to promote and accelerate protein folding. The sequence is that of Chaperonin GroEL 2 from Prochlorococcus marinus (strain MIT 9515).